Consider the following 143-residue polypeptide: uncharacterized protein (143 aa).

This is an uncharacterized protein from Thermoproteus tenax virus 1 (strain KRA1) (TTV1).